The chain runs to 48 residues: Toxin CSTX-15 (48 aa).

Cystine bridges form between Cys-3-Cys-18, Cys-10-Cys-27, Cys-17-Cys-42, and Cys-29-Cys-40.

It belongs to the neurotoxin 19 (CSTX) family. 12 subfamily. Heterodimer of A and B chains; disulfide-linked. Post-translationally, contains 4 disulfide bonds. In terms of tissue distribution, expressed by the venom gland.

It is found in the secreted. This is Toxin CSTX-15 from Cupiennius salei (American wandering spider).